We begin with the raw amino-acid sequence, 304 residues long: Release factor glutamine methyltransferase (304 aa).

Residues D144 and N188 each contribute to the S-adenosyl-L-methionine site. 188-191 (NPPY) is a substrate binding site.

Belongs to the protein N5-glutamine methyltransferase family. PrmC subfamily.

The enzyme catalyses L-glutaminyl-[peptide chain release factor] + S-adenosyl-L-methionine = N(5)-methyl-L-glutaminyl-[peptide chain release factor] + S-adenosyl-L-homocysteine + H(+). Functionally, methylates the class 1 translation termination release factors RF1/PrfA and RF2/PrfB on the glutamine residue of the universally conserved GGQ motif. The chain is Release factor glutamine methyltransferase from Mycobacterium tuberculosis (strain ATCC 25618 / H37Rv).